Consider the following 345-residue polypeptide: S-adenosylmethionine:tRNA ribosyltransferase-isomerase (345 aa).

The protein belongs to the QueA family. In terms of assembly, monomer.

Its subcellular location is the cytoplasm. The enzyme catalyses 7-aminomethyl-7-carbaguanosine(34) in tRNA + S-adenosyl-L-methionine = epoxyqueuosine(34) in tRNA + adenine + L-methionine + 2 H(+). It participates in tRNA modification; tRNA-queuosine biosynthesis. In terms of biological role, transfers and isomerizes the ribose moiety from AdoMet to the 7-aminomethyl group of 7-deazaguanine (preQ1-tRNA) to give epoxyqueuosine (oQ-tRNA). The polypeptide is S-adenosylmethionine:tRNA ribosyltransferase-isomerase (Finegoldia magna (strain ATCC 29328 / DSM 20472 / WAL 2508) (Peptostreptococcus magnus)).